A 201-amino-acid chain; its full sequence is Holliday junction branch migration complex subunit RuvA (201 aa).

Residues 1–63 (MIAYIKGTLN…EDAQILFGFQ (63 aa)) are domain I. Residues 64–142 (NRDEKYLFTK…SVFSITDEQQ (79 aa)) form a domain II region. The tract at residues 143–149 (KSSVSNV) is flexible linker. Residues 150-201 (NNNEVYSEAMEALKALGYTDKEVKQVLPHLKKDNDALSVDEAIRKALALLAK) form a domain III region.

Belongs to the RuvA family. In terms of assembly, homotetramer. Forms an RuvA(8)-RuvB(12)-Holliday junction (HJ) complex. HJ DNA is sandwiched between 2 RuvA tetramers; dsDNA enters through RuvA and exits via RuvB. An RuvB hexamer assembles on each DNA strand where it exits the tetramer. Each RuvB hexamer is contacted by two RuvA subunits (via domain III) on 2 adjacent RuvB subunits; this complex drives branch migration. In the full resolvosome a probable DNA-RuvA(4)-RuvB(12)-RuvC(2) complex forms which resolves the HJ.

It is found in the cytoplasm. The RuvA-RuvB-RuvC complex processes Holliday junction (HJ) DNA during genetic recombination and DNA repair, while the RuvA-RuvB complex plays an important role in the rescue of blocked DNA replication forks via replication fork reversal (RFR). RuvA specifically binds to HJ cruciform DNA, conferring on it an open structure. The RuvB hexamer acts as an ATP-dependent pump, pulling dsDNA into and through the RuvAB complex. HJ branch migration allows RuvC to scan DNA until it finds its consensus sequence, where it cleaves and resolves the cruciform DNA. The chain is Holliday junction branch migration complex subunit RuvA from Oceanobacillus iheyensis (strain DSM 14371 / CIP 107618 / JCM 11309 / KCTC 3954 / HTE831).